The chain runs to 262 residues: Oxidoreductase GME11367 (262 aa).

The protein belongs to the avfA family.

The protein operates within secondary metabolite biosynthesis. Its function is as follows. Oxidoreductase; part of the gene cluster that mediates the biosynthesis of dibenzodioxocinones such as pestalotiollide B, a novel class of inhibitors against cholesterol ester transfer protein (CEPT). The biosynthesis initiates from condensation of acetate and malonate units catalyzed by the non-reducing PKS pks8/GME11356. Pks8/GME11356 lacks a thioesterase (TE) domain, which is important to the cyclizing of the third ring of atrochrysone carboxylic acid, and the esterase GME11355 might play the role of TE and catalyzes the cyclization reaction of the C ring. The lactamase-like protein GME11357 (or other beta-lactamases in Pestalotiopsis microspora) probably hydrolyzes the thioester bond between the ACP of pks8/GME11356 and the intermediate to release atrochrysone carboxylic acid, which is spontaneously dehydrates to form endocrocin anthrone. Endocrocin anthrone is further converted to emodin via the endocrocin intermediate. Emodin is then oxidized by several enzymes such as the Baeyer-Villiger oxidase GME11358, the oxidoreductase GME11367, the short chain dehydrogenase/reductase GME11373, as well as by other oxidoreductases from the cluster, to modify the A and C rings and open the B ring, and finally yield monodictyphenone. The prenyltransferase GME11375 may catalyze the addition reaction between the C5 side chains and the carbon bone of dibenzodioxocinones. The remaining biochemical reactions to the final product dibenzodioxocinones should be methylation catalyzed by methyltransferase GME11366 and reduction and lactonization reaction catalyzed by a series of oxidordeuctases. This Pestalotiopsis microspora protein is Oxidoreductase GME11367.